A 389-amino-acid chain; its full sequence is Protein CysO (389 aa).

Position 127 is an N6-(pyridoxal phosphate)lysine (lysine 127). Pyridoxal 5'-phosphate-binding positions include asparagine 155, 261–265 (GTSGH), and serine 341.

This sequence belongs to the cysteine synthase/cystathionine beta-synthase family. As to quaternary structure, homodimer. The cofactor is pyridoxal 5'-phosphate.

The enzyme catalyses O-acetyl-L-serine + hydrogen sulfide = L-cysteine + acetate. It catalyses the reaction O-phospho-L-serine + hydrogen sulfide + H(+) = L-cysteine + phosphate. It carries out the reaction L-homocysteine + L-serine = L,L-cystathionine + H2O. It functions in the pathway amino-acid biosynthesis; L-cysteine biosynthesis; L-cysteine from L-serine: step 2/2. Functionally, cysteine synthase that can also catalyze the synthesis of S-sulfo-L-cysteine from thiosulfate and O(3)-acetyl-L-serine, as well as the sulfhydrylation of L-serine by sulfide. The chain is Protein CysO (cysO) from Aeropyrum pernix (strain ATCC 700893 / DSM 11879 / JCM 9820 / NBRC 100138 / K1).